The chain runs to 246 residues: E3 ubiquitin-protein ligase MARCHF2 (246 aa).

The RING-CH-type zinc-finger motif lies at 56–116 (DTPSDCPFCR…ELCHTEFAVE (61 aa)). 8 residues coordinate Zn(2+): Cys-64, Cys-67, Cys-80, Cys-82, His-90, Cys-93, Cys-106, and Cys-109. Residues 121-246 (PLTEWLKDPG…LKKVAEETPV (126 aa)) form a required for interaction with IKBKG region. Transmembrane regions (helical) follow at residues 138-158 (LCCD…SGWL) and 175-195 (AVGL…WTLV).

In terms of assembly, interacts with STX6; the interaction promotes MARCHF2-mediated ubiquitination and degradation of CFTR. Interacts with MARCHF3. Interacts with GOPC/CAL; the interaction leads to CFTR ubiquitination and degradation. Interacts with CFTR; the interaction leads to CFTR ubiqtuitination and degradation. Interacts (via PDZ domain) with DLG1 (via PDZ domains); the interaction leads to DLG1 ubiqtuitination and degradation. Interacts with ERGIC3. Interacts with ADRB2. Interacts with IKBKG/NEMO; during the late stages of macrophage viral and bacterial infection; the interaction leads to ubiquitination and degradation of IKBKG/NEMO. As to expression, ubiquitously expressed. Present in liver (at protein level).

It is found in the endoplasmic reticulum membrane. It localises to the lysosome membrane. The protein localises to the endosome membrane. The protein resides in the golgi apparatus membrane. Its subcellular location is the cytoplasm. It is found in the cell membrane. It catalyses the reaction S-ubiquitinyl-[E2 ubiquitin-conjugating enzyme]-L-cysteine + [acceptor protein]-L-lysine = [E2 ubiquitin-conjugating enzyme]-L-cysteine + N(6)-ubiquitinyl-[acceptor protein]-L-lysine.. Its pathway is protein modification; protein ubiquitination. E3 ubiquitin-protein ligase that may mediate ubiquitination of TFRC and CD86, and promote their subsequent endocytosis and sorting to lysosomes via multivesicular bodies. E3 ubiquitin ligases accept ubiquitin from an E2 ubiquitin-conjugating enzyme in the form of a thioester and then directly transfer the ubiquitin to targeted substrates. Together with GOPC/CAL mediates the ubiquitination and lysosomal degradation of CFTR. Ubiquitinates and therefore mediates the degradation of DLG1. Regulates the intracellular trafficking and secretion of alpha1-antitrypsin/SERPINA1 and HP/haptoglobin via ubiquitination and degradation of the cargo receptor ERGIC3. Negatively regulates the antiviral and antibacterial immune response by repression of the NF-kB and type 1 IFN signaling pathways, via MARCHF2-mediated K48-linked polyubiquitination of IKBKG/NEMO, resulting in its proteasomal degradation. May be involved in endosomal trafficking through interaction with STX6. The chain is E3 ubiquitin-protein ligase MARCHF2 (Marchf2) from Rattus norvegicus (Rat).